We begin with the raw amino-acid sequence, 267 residues long: NAD kinase (267 aa).

Asp52 serves as the catalytic Proton acceptor. NAD(+) is bound by residues 52 to 53 (DG), Arg57, 121 to 122 (NE), Arg132, Lys150, Asp152, 163 to 168 (TAYSLS), and Ala187.

This sequence belongs to the NAD kinase family. A divalent metal cation is required as a cofactor.

The protein localises to the cytoplasm. It catalyses the reaction NAD(+) + ATP = ADP + NADP(+) + H(+). In terms of biological role, involved in the regulation of the intracellular balance of NAD and NADP, and is a key enzyme in the biosynthesis of NADP. Catalyzes specifically the phosphorylation on 2'-hydroxyl of the adenosine moiety of NAD to yield NADP. The sequence is that of NAD kinase from Fusobacterium nucleatum subsp. nucleatum (strain ATCC 25586 / DSM 15643 / BCRC 10681 / CIP 101130 / JCM 8532 / KCTC 2640 / LMG 13131 / VPI 4355).